Consider the following 355-residue polypeptide: Daphnetin O-methyltransferase 1 (355 aa).

S-adenosyl-L-homocysteine-binding residues include aspartate 222, aspartate 242, and lysine 256. The active-site Proton acceptor is histidine 260.

This sequence belongs to the class I-like SAM-binding methyltransferase superfamily. Cation-independent O-methyltransferase family. COMT subfamily.

The catalysed reaction is 7,8-dihydroxycoumarin + S-adenosyl-L-methionine = 7-hydroxy-8-methoxycoumarin + S-adenosyl-L-homocysteine + H(+). It participates in aromatic compound metabolism. It functions in the pathway secondary metabolite biosynthesis. Its function is as follows. O-methyltransferase involved in the biosynthesis of coumarins natural products such as daphnetin derivatives. Catalyzes specifically the methylation of daphnetin (7,8-dihydroxycoumarin) to produce hydrangetin (7-hydroxy-8-methoxycoumarin). Probably involved in acclimation to low temperature conditions. This chain is Daphnetin O-methyltransferase 1, found in Secale cereale (Rye).